Reading from the N-terminus, the 145-residue chain is D-aminoacyl-tRNA deacylase (145 aa).

The short motif at 137–138 is the Gly-cisPro motif, important for rejection of L-amino acids element; the sequence is GP.

The protein belongs to the DTD family. Homodimer.

It localises to the cytoplasm. The catalysed reaction is glycyl-tRNA(Ala) + H2O = tRNA(Ala) + glycine + H(+). The enzyme catalyses a D-aminoacyl-tRNA + H2O = a tRNA + a D-alpha-amino acid + H(+). Functionally, an aminoacyl-tRNA editing enzyme that deacylates mischarged D-aminoacyl-tRNAs. Also deacylates mischarged glycyl-tRNA(Ala), protecting cells against glycine mischarging by AlaRS. Acts via tRNA-based rather than protein-based catalysis; rejects L-amino acids rather than detecting D-amino acids in the active site. By recycling D-aminoacyl-tRNA to D-amino acids and free tRNA molecules, this enzyme counteracts the toxicity associated with the formation of D-aminoacyl-tRNA entities in vivo and helps enforce protein L-homochirality. This is D-aminoacyl-tRNA deacylase from Salmonella choleraesuis (strain SC-B67).